The sequence spans 42 residues: Phospholipase A1 (42 aa).

It belongs to the AB hydrolase superfamily. Lipase family. Post-translationally, contains six disulfide bonds. As to expression, expressed by the venom gland.

The protein resides in the secreted. It carries out the reaction a 1,2-diacyl-sn-glycero-3-phosphocholine + H2O = a 2-acyl-sn-glycero-3-phosphocholine + a fatty acid + H(+). Its function is as follows. Catalyzes the hydrolysis of phosphatidylcholine with phospholipase A1 activity. May act as an allergen and induce hemolytic activity. The protein is Phospholipase A1 of Polistes gallicus (Paper wasp).